We begin with the raw amino-acid sequence, 4080 residues long: MAPSQAPREPIAIVGSGCRFPGESSSPSKLWELLQAPRDVQTEIPPTRFNPHGFYHPDNLHHGTSNVRHSYLLTEDHRHFDAQFFGIKPAEAHCIDPQQRLLMETVYESLESAGLRLEDLRGSETAVYVGLMCGDYADIVLRDPESFPMYLSTGTARSIMSNRISYFFDWHGPSMTIDTACSSSLVAVHEAVQTLRLGRSRVAVAAGSNLCLSPEPYIAESKLQMLSPTGRSRMWDIQADGYARGDGVAAVVLKTLSAALADGDHIECLIRETSVNQDGRTRGITMPSSEAQTRLIQDTYARAGLDPLKPQERCQYFEAHGTGTPTGDPLEAAAIRQAFFPGDNNQDRGCLFVGSIKTVVGHTEGTAGLAGVLKASLALRNGIIPPNLLFNQLNPKIKPFYTNLEIATAAKPWPVLPAGVPRRASVNSFGFGGTNAHAIIEAYEPALTAPSKSTEPDIAFIPFVFSAASESALRRMLELYAQHLSKNPTINARDLGWTLQARRSRFPFSIAVPGATTDQLRSNLETRLNSTDARQPLKIVKQESRPENPRILGVFTGQGAQWATMGRALYQSPKVRQIIQELDASLQALPVGERPSWTLASELTADASVSRIKAAEISQPMCTAVQVVLVQLLQSAGVVFDAVVGHSSGEIAAAYAAGFLSGTDAIRIAYYRGLCARLAQGAHGEKGAMMAVGTGVEDALELCAEPEFRGRMSVAAVNSSASVTLSGDADAITQAKEILDEEKKFARVLVVDKAYHSHHMQACSGRYLSCLAKARIAVSAPTDTKCVWYSTVRQGPVTEADLADLTGPYWNDNMVSPVLFAQAVETALAARGPFNMAVEVGPHPALRGPAQQTVQDVLETSLPYTPTLQRGMNDVEAMAECLGLLWQGLAPGFVDLSSYDAFLSQGAVSRVIKDLPRYSWDHDRVFWYESRVSRATRQRIAASHPILGTRCPDGVEQEFRWRNFLSLKELPWLTGHRIQGQIIFPGAGYISAAVDSARAMSSNESIQLVELQELLIRQAIVFEDENASVEILVSITDVTHHSKDMVRAQFSFYSAVGKESTQMTLNASGRLVITYGPVRKDALPVQRPSLVDMVDVPSERFYNALDPLGYSYTGRFRALKSMQRKLGIATGLVTRQEAADLSSVTLDPAMLDAAIQAVLLAKSFPGDGELWCSQVPKVIHRIAVNPTLCDPSGNGVESTFPLDAVLTMMKASDTQGDVDVYSADGQYTMIRMEGIHAVPLEATNADRDRPFFSGVVWGPAAPDSQTVNFDATATPEEYELAYVLERVATFYLRKIHLAFPMDHSARHEGPYVGLLNYATYVTQQVASGYHRYTQPHWARDTVAVIKSESQRFPNNIDLAVMHIIGEHMVDVISTRATILEHLTKDNLLSRYYEQAMGIGHFSDYLASVVEQIVHRYPQMKVLEIGAGTGMATKKVIQRVGHSFGSYTFTDISSGFFENAREIFASHQDQMVYKVLDAEKDPVAQGFGEQSYDLIVASFVLHATSHLETTLHNLRRLLKPGGYVVMLEVTNLEQSRLGYIFGSLPGWWLGANDGRILSPCVPTEEWDRLLKLTGFSGVDTFTSDADALPYPASAIVSQAVDETVDFLRNPLGTPSDFVNRATPVVLIGGASSSVRVIRDVVKRHLDTRFDQVQVVDRLSDFVAISPAVSNGLLTLNLSDLEEPVFQNMTADSLAALKLLYERSNYVLWVTEDARAGNPHQNQSLGFGRSMMVEMPHVQSQFLDLDRITETSSVASRIVDAALRFVGVNMPDRGGDVASAGLLWSTEPEIAVIGGRELLPRIKLNRSQNLRYNASRRAIAEDVDMDQKSVQLVRNGNAYVLEQGSTSGFGNQTPGYTRIRVDVSSLKSLHLGRGNALYLVAGTVLATGEKVIGFADKNSSIVDIPPSWMSHRPDISMAALILSIIARLFSRAILSSISPGGVLVVAEPDELLAPVLEWQASQQKIRVVFVTTQEDAPERPNWVVLHSQVHVRSLPKLAPTEPVTILDLSTGEEPSALALKLRNSLHPASAFERLTYWFSDHARRGEIHIPAEAMLTMYRPPMSPPASDSVIASHSFPVTDVSQIPAARCPLAVVDWQSTSHVPALIRPVDHYPMLKSNKTYWLVGLTGSLGLSLCAWMIHQGAQNVVLTSRNPKIDQIILQELRSLGARVEVYAGDVTNQESLRGVYDRICQTLPPVAGVGQGAMVLIDTMIKDMEIDAMQSVLQPKVKGSINLDELFSAERPLDFFIFFSSATCVTGNIGQSNYAAANMFMTGLAANRNRRGLAGSVMNIGAIMGVGYVTRETSEALQRNLLKSGHVWMSEQDFHTIFAEAILAGTPGSDANVEITCGLRITNASEEQRPLWSFNPRFQHLVVMEEQVEETYEQDKKGMSLKLQLREARTTDEIYEVIKECFIVKLQIMLGLDDAATNSITSKAADDLGIDSLNTVEIRSWFLKEMKVDIPVLRILGGATIGEIIKFVLEKLPSDMTPSLGLSPPTGAASKATSQPNPKPKVVVERRNVPRLEKKIVHSAGSRTSSSVTGTSKSVSPARSMDTASSQTSEAASPSIHTEEITKPLKPLAPLLKADVVSSNLGKVITPVEQTAALSVRKEPLSFGQSRFWFLKLYLEDQTTFNITCLLRMTGPLSVDSLSRAVTAVGQRHEALRTCFTVEDGQSPVQTILPESTLKLERQEYRTMADVNTATKKLTQHVYEMESGRLMRVILLSSAPNSSVHYVLVGYHHINMDGVSLEVFLHDLEKAYRGQPLSSDLLQYPDYAAKQRQERNQGAWQDDLTFWKNEMVGSNLEIPLLPLASVAIRKPLTQYRHHRVEQRLDARLGAQIRQLCQSIKATPSHFYLATFTTLLARLTRTREIWVGMADANRIQAETADSIGNYLNLLALRMQYDPDQPFVASVQAARKKSYGALAHSRIPFDVLLSELQVPRSSTHSPLFQVFMDYRHDVREKRMFGDCQLEGVEYEMGRTAYDIALDVVDTADDGPLIIMGLQESLYSPDTAQMLLNSFLEMVRAFAQDSKQPGGHVSLFSASDLEKALALGNGSVVASQWPATLSHRIDDMAKQYPQKLALNDGDNLRLTFQQMSQRADSIASALLSANVSRQQRVAVFQHPSSDCICSILAILRIGATYVPLDLRLELARLRSIVQDCEPTVFLVDSHTQSQAPDLMLTRPAMTINIADLPRIAPFPVMNRAAAEDEAVILYTSGSTGNPKGVPLTHENLRVNIEGNQAEFQFGPDDCLLQQIAFSFDFSVWQIFMALANGASLFIAPSTHRGDPVALMDLVVREDITITGATPSEYRSWFQHGDLARLKTSQWKTAVSAGEAMTTNMIRDFQALNKSDLRLVNGYGPTEASMSSNKLVVPYLTNKDHPEEWMEKGAVVAGYTAPNYSIYIVDEAMNLLPIGLPGQILIGGPGIASGYLNNKELSCIRFINDKYASPEQRACGWRWAHLTGDRGRIGADGRLRIEGRIEGDTQVKLRGYRIDLQDVEAAMLKASPGAFKDLVVSLHQATQALVAHVVFSQHYPAHKHSQALEIKSLELPRYMWPARTVSIDQMPVTVHGKLDRKALQTMDLPAIEPMKQTSTAHLNEAQAQMVQLWEEVISKDILAAHHIVAESDFFAVGGTSMLLVDLQRQIKSWFKMEIALAELFSANTLEKMALLIKPQEDIATPAAVDAAPPSSPSPLALTASLPPAPTTINWSEEVQLPRVLREQTSSGTTVSVPEKTSGLRLVLTGATGFIGQALLQQLTANPAISTVHCIAVRDPSAIPAHEKILVHAGDLTHAALGLAPVEAQAIFREVDAVIHNGADVSFMKSYHSLRRTNVESTIALIQNSLSRQIPFHYISSSGIANLAGTTTFAEVSAASFIPPTDGSQGYLATKWVSERLLEEAHREFGLPVYIHRPSSVTGSNAPPLDLMDNLMTYARRLKAVPMPERSSWKGYLDFVPVEQVVRDVTGDVLSAAGTVPSARASKVHYIHHLGRQVSLTGLHRYLERETGAVYRVLKMGEWLEEATQVGMDALLRTYLESMDKEDVKVVFPRLVAGKRHASTVGVAKGVKIGESWLEKGKTLLFSW.

A Ketosynthase family 3 (KS3) domain is found at 8–442; that stretch reads REPIAIVGSG…GTNAHAIIEA (435 aa). Active-site for beta-ketoacyl synthase activity residues include Cys-181, His-320, and His-362. Residues 554 to 878 are malonyl-CoA:ACP transacylase (MAT) domain; sequence VFTGQGAQWA…QRGMNDVEAM (325 aa). The tract at residues 944–1078 is N-terminal hotdog fold; the sequence is HPILGTRCPD…GRLVITYGPV (135 aa). A PKS/mFAS DH domain is found at 944-1246; it reads HPILGTRCPD…AVPLEATNAD (303 aa). Residues 945–1243 form a dehydratase (DH) domain region; that stretch reads PILGTRCPDG…GIHAVPLEAT (299 aa). His-976 serves as the catalytic Proton acceptor; for dehydratase activity. The tract at residues 1093 to 1246 is C-terminal hotdog fold; it reads MVDVPSERFY…AVPLEATNAD (154 aa). Asp-1152 (proton donor; for dehydratase activity) is an active-site residue. The interval 1400–1585 is methyltransferase (MT) domain; that stretch reads HFSDYLASVV…GVDTFTSDAD (186 aa). Positions 2118-2292 are ketoreductase (KR)domain; sequence TYWLVGLTGS…AGSVMNIGAI (175 aa). The segment at 2399-2478 is peptidyl carrier protein; that stretch reads TTDEIYEVIK…TIGEIIKFVL (80 aa). Residues 2405 to 2481 form the Carrier 1 domain; sequence EVIKECFIVK…EIIKFVLEKL (77 aa). O-(pantetheine 4'-phosphoryl)serine is present on Ser-2441. The disordered stretch occupies residues 2488 to 2569; sequence SLGLSPPTGA…AASPSIHTEE (82 aa). A compositionally biased stretch (basic and acidic residues) spans 2511 to 2525; that stretch reads VVVERRNVPRLEKKI. The segment covering 2528-2545 has biased composition (low complexity); that stretch reads SAGSRTSSSVTGTSKSVS. Polar residues predominate over residues 2551–2565; that stretch reads DTASSQTSEAASPSI. The segment at 2607-3036 is condensation; that stretch reads KEPLSFGQSR…DSKQPGGHVS (430 aa). Positions 3069–3478 are adenylation; that stretch reads DMAKQYPQKL…DGRLRIEGRI (410 aa). Positions 3593 to 3673 constitute a Carrier 2 domain; the sequence is AHLNEAQAQM…KMALLIKPQE (81 aa). The thiolation stretch occupies residues 3598–3670; that stretch reads AQAQMVQLWE…TLEKMALLIK (73 aa). Ser-3633 bears the O-(pantetheine 4'-phosphoryl)serine mark. Positions 3740-3959 are reductase (RED) domain; the sequence is LTGATGFIGQ…DFVPVEQVVR (220 aa).

This sequence in the C-terminal section; belongs to the NRP synthetase family.

The protein operates within secondary metabolite biosynthesis. In terms of biological role, hybrid PKS-NRPS synthetase; part of the gene cluster that mediates the biosynthesis of oxaleimides, cytotoxic compounds containing an unusual disubstituted succinimide moiety. The first step of the pathway is provided by the HR-PKS poxF that serves in a new mode of collaborative biosynthesis with the PKS-NRPS poxE, by providing the olefin containing amino acid substrate via the synthesis of an ACP-bound dec-4-enoate. The cytochrome P450 monooxygenase poxM-catalyzed oxidation at the alpha-position creates the enzyme-bound 2-hydroxydec-4-enoyl-ACP thioester, which may be prone to spontaneous hydrolysis to yield 2-hydroxydec-4-enoic acid due to increased electrophilicity of the carbonyl. 2-hydroxydec-4-enoic acid can then be further oxidized by poxM to yield the alpha-ketoacid 2-oxodec-4-enoicacid, which is reductively aminated by the aminotransferase poxL to yield (S,E)-2-aminodec-4-enoic acid. The Hybrid PKS-NRPS synthetase poxE then performs condensation between the octaketide product of its PKS modules and the amino group of (S,E)-2-aminodec-4-enoic acid which is activated and incorporated by the adenylation domain. The resulting aminoacyl product can be cyclized by the Diels-Alderase PoxQ and reductively released by the reductive (R) domain of poxE to yield an aldehyde intermediate. The released aldehyde is then substrate for a Knoevenagel condensation by the hydrolyase poxO followed by an oxidation at the 5-position of the pyrrolidone ring. The presence of the olefin from the amino acid building block allows for migration of the substituted allyl group to occur. This allylic transposition reaction takes place in a conjugate addition, semipinacol-like fashion to yield a succinimide intermediate. Iterative two-electron oxidations of the C7 methyl of the succinimide intermediate to the carboxylic acid can be catalyzed by one of two remaining cytochrome P450 monooxygenasess poxC or poxD to yield oxaleimide A. Subsequent oxidation yields the maleimide scaffold oxaleimide I. Both oxaleimide A and oxaleimide I can undergo oxidative modifications in the decalin ring to yield the series of products oxaleimides B to H. The sequence is that of Hybrid PKS-NRPS synthetase poxE from Penicillium oxalicum.